A 68-amino-acid polypeptide reads, in one-letter code: Large ribosomal subunit protein bL33c (68 aa).

It belongs to the bacterial ribosomal protein bL33 family.

The protein resides in the plastid. This is Large ribosomal subunit protein bL33c from Cuscuta reflexa (Southern Asian dodder).